The sequence spans 415 residues: Phosphoribosylamine--glycine ligase (415 aa).

The ATP-grasp domain maps to 108-311; sequence KKIMEKYNIP…LMQHIIDLDE (204 aa). Residue 134 to 191 participates in ATP binding; sequence IENCELPVVVKKDGLAAGKGVIIADTIEAARSAIEIMYGDEEEGTVVFETFLEGEEFS. 2 residues coordinate Mg(2+): Glu281 and Asn283.

The protein belongs to the GARS family. Mg(2+) is required as a cofactor. The cofactor is Mn(2+).

It carries out the reaction 5-phospho-beta-D-ribosylamine + glycine + ATP = N(1)-(5-phospho-beta-D-ribosyl)glycinamide + ADP + phosphate + H(+). It participates in purine metabolism; IMP biosynthesis via de novo pathway; N(1)-(5-phospho-D-ribosyl)glycinamide from 5-phospho-alpha-D-ribose 1-diphosphate: step 2/2. This is Phosphoribosylamine--glycine ligase from Staphylococcus aureus (strain MW2).